We begin with the raw amino-acid sequence, 252 residues long: Adapter protein MecA (252 aa).

This sequence belongs to the MecA family. Homodimer.

Enables the recognition and targeting of unfolded and aggregated proteins to the ClpC protease or to other proteins involved in proteolysis. In Streptococcus uberis (strain ATCC BAA-854 / 0140J), this protein is Adapter protein MecA.